Reading from the N-terminus, the 850-residue chain is Trimethylamine-N-oxide reductase (850 aa).

Residues 1–39 (MKNKDSLHVSRRRFLAQLGGLTVAGMLGPSLLTPRSARA) constitute a signal peptide (tat-type signal). Ser-191 is a binding site for Mo-bis(molybdopterin guanine dinucleotide).

The protein belongs to the prokaryotic molybdopterin-containing oxidoreductase family. The cofactor is Mo-bis(molybdopterin guanine dinucleotide). In terms of processing, predicted to be exported by the Tat system. The position of the signal peptide cleavage has not been experimentally proven.

The protein localises to the periplasm. The catalysed reaction is trimethylamine + 2 Fe(III)-[cytochrome c] + H2O = trimethylamine N-oxide + 2 Fe(II)-[cytochrome c] + 3 H(+). Functionally, reduces trimethylamine-N-oxide (TMAO) into trimethylamine; an anaerobic reaction coupled to energy-yielding reactions. This Salmonella typhimurium (strain LT2 / SGSC1412 / ATCC 700720) protein is Trimethylamine-N-oxide reductase (torA).